Here is a 175-residue protein sequence, read N- to C-terminus: MMYIVFIMSVLYVVGFIGFSSKPSPVYGGMSLIVSGGLGCGIIMSSGGSFLGLVVFLVYLGGMMVVFGYTIAMATEEYPETWGSNVVVLSAFLVGLLMEIFMIVWLFSGEHELVGFYFGGLEDLVVLGEGSFGYVREDYSGGASLYSYGFWFLAMAGWMLFVSIFIAIEVTRKRY.

The next 6 helical transmembrane spans lie at 1-21 (MMYI…GFSS), 24-44 (SPVY…GIIM), 51-71 (LGLV…GYTI), 87-107 (VVLS…VWLF), 113-133 (LVGF…GSFG), and 148-168 (YGFW…FIAI).

It belongs to the complex I subunit 6 family. Core subunit of respiratory chain NADH dehydrogenase (Complex I) which is composed of 45 different subunits.

It is found in the mitochondrion inner membrane. The enzyme catalyses a ubiquinone + NADH + 5 H(+)(in) = a ubiquinol + NAD(+) + 4 H(+)(out). Core subunit of the mitochondrial membrane respiratory chain NADH dehydrogenase (Complex I) which catalyzes electron transfer from NADH through the respiratory chain, using ubiquinone as an electron acceptor. Essential for the catalytic activity and assembly of complex I. The protein is NADH-ubiquinone oxidoreductase chain 6 (MT-ND6) of Mammuthus primigenius (Siberian woolly mammoth).